Consider the following 341-residue polypeptide: Anthranilate phosphoribosyltransferase (341 aa).

5-phospho-alpha-D-ribose 1-diphosphate contacts are provided by residues G79, 82 to 83 (GD), T87, 89 to 92 (NIST), 107 to 115 (KHGNRAVSS), and S119. G79 lines the anthranilate pocket. Residue S91 coordinates Mg(2+). Position 110 (N110) interacts with anthranilate. Anthranilate is bound at residue R165. Mg(2+) is bound by residues D224 and E225.

Belongs to the anthranilate phosphoribosyltransferase family. Homodimer. Requires Mg(2+) as cofactor.

It carries out the reaction N-(5-phospho-beta-D-ribosyl)anthranilate + diphosphate = 5-phospho-alpha-D-ribose 1-diphosphate + anthranilate. The protein operates within amino-acid biosynthesis; L-tryptophan biosynthesis; L-tryptophan from chorismate: step 2/5. In terms of biological role, catalyzes the transfer of the phosphoribosyl group of 5-phosphorylribose-1-pyrophosphate (PRPP) to anthranilate to yield N-(5'-phosphoribosyl)-anthranilate (PRA). In Bacillus cereus (strain AH187), this protein is Anthranilate phosphoribosyltransferase.